We begin with the raw amino-acid sequence, 343 residues long: Fanconi anemia group F protein (343 aa).

As to quaternary structure, belongs to the multisubunit FA complex composed of FANCA, FANCB, FANCC, FANCE, FANCF, FANCG, FANCL/PHF9 and FANCM. In complex with FANCA, FANCG and FANCL, but not with FANCC, nor FANCE, interacts with HES1; this interaction may be essential for the stability and nuclear localization of FA core complex proteins.

The protein resides in the nucleus. DNA repair protein that may operate in a postreplication repair or a cell cycle checkpoint function. May be implicated in interstrand DNA cross-link repair and in the maintenance of normal chromosome stability. This is Fanconi anemia group F protein from Mus musculus (Mouse).